Consider the following 935-residue polypeptide: Formin-I (935 aa).

A coiled-coil region spans residues 35–76 (QQQQQQQQQQINNENENSINNQENKENNNKDNNNNNNKEIKQ). Disordered regions lie at residues 52 to 78 (SINNQENKENNNKDNNNNNNKEIKQSS), 380 to 511 (LSSA…QLTP), and 561 to 590 (KEKMSKENLNNSNNNNNNNSNNNGEEQSLS). Residues 384–407 (KKQPQQQPQKDVTSSSSSSSNSSS) are compositionally biased toward low complexity. Residues 418–428 (ITTNDSSSSNP) are compositionally biased toward polar residues. Residues 431–443 (DFDKLSLSSDDKV) are compositionally biased toward basic and acidic residues. The span at 444–454 (NNNNVQIENTT) shows a compositional bias: polar residues. An FH1 domain is found at 444–505 (NNNNVQIENT…KPNNSGGGGG (62 aa)). Pro residues predominate over residues 456–482 (SVPPPPPVGAPPPPPPPPPPPPPPPPS). The segment covering 484 to 499 (LKLNRNRISTPKKPNN) has biased composition (polar residues). In terms of domain architecture, FH2 spans 506–935 (GGQLTPLQKK…SLNLSTLNSK (430 aa)). Low complexity predominate over residues 568 to 583 (NLNNSNNNNNNNSNNN). Coiled coils occupy residues 702 to 730 (SLLDSIEINNNQLSKAIEQLRNSRKFIKV) and 803 to 834 (QSSLENILEESNEIENKFKQVDQEIQYHQQLL).

The protein belongs to the formin homology family. Diaphanous subfamily.

Its function is as follows. Formins play an important role in the nucleation of actin and the formation of linear actin filaments. The chain is Formin-I (forI) from Dictyostelium discoideum (Social amoeba).